The following is a 402-amino-acid chain: Type II NADH:quinone oxidoreductase (402 aa).

FAD is bound by residues 12–16 (GAGYA), 39–40 (NK), and Val-83. Residue Glu-172 is part of the active site. Residues Asp-302, 319-320 (AQ), and Lys-379 contribute to the FAD site.

This sequence belongs to the NADH dehydrogenase family. The cofactor is FAD.

It localises to the cell membrane. The catalysed reaction is a quinone + NADH + H(+) = a quinol + NAD(+). In terms of biological role, alternative, nonproton pumping NADH:quinone oxidoreductase that delivers electrons to the respiratory chain by oxidation of NADH and reduction of quinones, and contributes to the regeneration of NAD(+). The chain is Type II NADH:quinone oxidoreductase from Staphylococcus saprophyticus subsp. saprophyticus (strain ATCC 15305 / DSM 20229 / NCIMB 8711 / NCTC 7292 / S-41).